The chain runs to 873 residues: Alanine--tRNA ligase (873 aa).

Histidine 562, histidine 566, cysteine 664, and histidine 668 together coordinate Zn(2+).

This sequence belongs to the class-II aminoacyl-tRNA synthetase family. It depends on Zn(2+) as a cofactor.

Its subcellular location is the cytoplasm. The enzyme catalyses tRNA(Ala) + L-alanine + ATP = L-alanyl-tRNA(Ala) + AMP + diphosphate. Catalyzes the attachment of alanine to tRNA(Ala) in a two-step reaction: alanine is first activated by ATP to form Ala-AMP and then transferred to the acceptor end of tRNA(Ala). Also edits incorrectly charged Ser-tRNA(Ala) and Gly-tRNA(Ala) via its editing domain. The protein is Alanine--tRNA ligase of Photobacterium profundum (strain SS9).